The sequence spans 791 residues: AP-1 complex subunit gamma-like 2 (791 aa).

The GAE domain maps to 671-786; the sequence is APIPSVRVFE…QEIFEVDNLP (116 aa).

Belongs to the adaptor complexes large subunit family. As to quaternary structure, may interact with AP1S1/Sigma1A-adaptin and AP1S2/Sigma1B-adaptin. Probably does not interact with APB1. Interacts (via GAE domain) with RABEP1, NECAP1, CLINT1 and AFTPH/aftiphilin. Interacts with HBV major surface antigen L. Interacts with HBV core protein C in a ubiquitin-dependent manner. Binds ubiquitin. As to expression, widely expressed.

It localises to the golgi apparatus membrane. Its subcellular location is the cytoplasmic vesicle membrane. The protein resides in the endosome membrane. May function in protein sorting in late endosomes or multivesucular bodies (MVBs). Involved in MVB-assisted maturation of hepatitis B virus (HBV). The protein is AP-1 complex subunit gamma-like 2 (Ap1g2) of Mus musculus (Mouse).